Here is a 478-residue protein sequence, read N- to C-terminus: Protein nucleotidyltransferase YdiU (478 aa).

Positions 84, 86, 87, 107, 119, 120, 170, and 177 each coordinate ATP. Asp-246 serves as the catalytic Proton acceptor. Residues Asn-247 and Asp-256 each contribute to the Mg(2+) site. ATP is bound at residue Asp-256.

The protein belongs to the SELO family. It depends on Mg(2+) as a cofactor. Mn(2+) serves as cofactor.

It catalyses the reaction L-seryl-[protein] + ATP = 3-O-(5'-adenylyl)-L-seryl-[protein] + diphosphate. The catalysed reaction is L-threonyl-[protein] + ATP = 3-O-(5'-adenylyl)-L-threonyl-[protein] + diphosphate. It carries out the reaction L-tyrosyl-[protein] + ATP = O-(5'-adenylyl)-L-tyrosyl-[protein] + diphosphate. The enzyme catalyses L-histidyl-[protein] + UTP = N(tele)-(5'-uridylyl)-L-histidyl-[protein] + diphosphate. It catalyses the reaction L-seryl-[protein] + UTP = O-(5'-uridylyl)-L-seryl-[protein] + diphosphate. The catalysed reaction is L-tyrosyl-[protein] + UTP = O-(5'-uridylyl)-L-tyrosyl-[protein] + diphosphate. Functionally, nucleotidyltransferase involved in the post-translational modification of proteins. It can catalyze the addition of adenosine monophosphate (AMP) or uridine monophosphate (UMP) to a protein, resulting in modifications known as AMPylation and UMPylation. The polypeptide is Protein nucleotidyltransferase YdiU (Shigella boydii serotype 4 (strain Sb227)).